We begin with the raw amino-acid sequence, 544 residues long: CTP synthase (544 aa).

The tract at residues Met-1 to Leu-265 is amidoligase domain. Ser-13 is a binding site for CTP. A UTP-binding site is contributed by Ser-13. Residues Ser-14–Ile-19 and Asp-71 each bind ATP. Mg(2+) contacts are provided by Asp-71 and Glu-139. CTP contacts are provided by residues Asp-146–Glu-148, Lys-186–Gln-191, and Lys-222. UTP contacts are provided by residues Lys-186–Gln-191 and Lys-222. A Glutamine amidotransferase type-1 domain is found at Lys-290–Ala-544. Position 353 (Gly-353) interacts with L-glutamine. Cys-380 (nucleophile; for glutamine hydrolysis) is an active-site residue. L-glutamine is bound by residues Leu-381 to Gln-384, Glu-404, and Arg-471. Catalysis depends on residues His-517 and Glu-519.

This sequence belongs to the CTP synthase family. As to quaternary structure, homotetramer.

It catalyses the reaction UTP + L-glutamine + ATP + H2O = CTP + L-glutamate + ADP + phosphate + 2 H(+). It carries out the reaction L-glutamine + H2O = L-glutamate + NH4(+). The enzyme catalyses UTP + NH4(+) + ATP = CTP + ADP + phosphate + 2 H(+). The protein operates within pyrimidine metabolism; CTP biosynthesis via de novo pathway; CTP from UDP: step 2/2. With respect to regulation, allosterically activated by GTP, when glutamine is the substrate; GTP has no effect on the reaction when ammonia is the substrate. The allosteric effector GTP functions by stabilizing the protein conformation that binds the tetrahedral intermediate(s) formed during glutamine hydrolysis. Inhibited by the product CTP, via allosteric rather than competitive inhibition. Its function is as follows. Catalyzes the ATP-dependent amination of UTP to CTP with either L-glutamine or ammonia as the source of nitrogen. Regulates intracellular CTP levels through interactions with the four ribonucleotide triphosphates. This Neisseria meningitidis serogroup A / serotype 4A (strain DSM 15465 / Z2491) protein is CTP synthase.